A 354-amino-acid chain; its full sequence is Homeobox-leucine zipper protein HOX27 (354 aa).

The tract at residues 98–175 (SVAAGAPGME…DDEGASARKK (78 aa)) is disordered. Over residues 148-157 (QGGGGGGGGE) the composition is skewed to gly residues. The segment at residues 171–230 (SARKKLRLSKEQSAFLEESFKEHSTLNPKQKVALAKQLNLRPRQVEVWFQNRRARTKLKQ) is a DNA-binding region (homeobox). The segment at 229–273 (KQTEVDCEYLKRCCETLTEENRRLHKELAELRALKTARPFYMHLP) is leucine-zipper. Residues 294-323 (STSAPAAATSPAAAPTAAARTAVASPEPHR) form a disordered region.

Belongs to the HD-ZIP homeobox family. Class II subfamily. As to expression, expressed in seedlings, roots, stems, leaf sheaths and blades and panicles.

The protein localises to the nucleus. Functionally, probable transcription factor. This is Homeobox-leucine zipper protein HOX27 (HOX27) from Oryza sativa subsp. indica (Rice).